A 343-amino-acid polypeptide reads, in one-letter code: S-adenosylmethionine:tRNA ribosyltransferase-isomerase (343 aa).

This sequence belongs to the QueA family. As to quaternary structure, monomer.

Its subcellular location is the cytoplasm. The enzyme catalyses 7-aminomethyl-7-carbaguanosine(34) in tRNA + S-adenosyl-L-methionine = epoxyqueuosine(34) in tRNA + adenine + L-methionine + 2 H(+). It functions in the pathway tRNA modification; tRNA-queuosine biosynthesis. Its function is as follows. Transfers and isomerizes the ribose moiety from AdoMet to the 7-aminomethyl group of 7-deazaguanine (preQ1-tRNA) to give epoxyqueuosine (oQ-tRNA). The chain is S-adenosylmethionine:tRNA ribosyltransferase-isomerase from Dehalococcoides mccartyi (strain ATCC BAA-2100 / JCM 16839 / KCTC 5957 / BAV1).